The following is a 517-amino-acid chain: Glycerol kinase 5 (517 aa).

S23 and T24 together coordinate ATP. Glycerol is bound by residues R93, D270, and Q271. Residues T292, G335, and G432 each coordinate ATP.

Belongs to the FGGY kinase family.

The protein resides in the cytoplasm. The catalysed reaction is glycerol + ATP = sn-glycerol 3-phosphate + ADP + H(+). It functions in the pathway polyol metabolism; glycerol degradation via glycerol kinase pathway; sn-glycerol 3-phosphate from glycerol: step 1/1. Its function is as follows. Skin-specific kinase that plays a key role in glycerol metabolism, catalyzing its phosphorylation to produce sn-glycerol 3-phosphate. Involved in skin-specific regulation of sterol regulatory element-binding protein (SREBP) processing and lipid biosynthesis. The chain is Glycerol kinase 5 (GK5) from Gallus gallus (Chicken).